The following is a 133-amino-acid chain: Small ribosomal subunit protein eS17 (133 aa).

Belongs to the eukaryotic ribosomal protein eS17 family.

In Spodoptera frugiperda (Fall armyworm), this protein is Small ribosomal subunit protein eS17 (RpS17).